Reading from the N-terminus, the 380-residue chain is Cytochrome b (380 aa).

The next 4 membrane-spanning stretches (helical) occupy residues 34-54 (FGSL…LLAM), 78-99 (WLIR…YLHI), 114-134 (WNTG…GYVL), and 179-199 (FFAL…IHLT). Heme b contacts are provided by H84 and H98. Heme b is bound by residues H183 and H197. An a ubiquinone-binding site is contributed by H202. The next 4 helical transmembrane spans lie at 227–247 (LKDI…ALFS), 289–309 (LGGV…PFLH), 321–341 (LSQL…WVGS), and 348–368 (FIII…ILFP).

The protein belongs to the cytochrome b family. In terms of assembly, the cytochrome bc1 complex contains 11 subunits: 3 respiratory subunits (MT-CYB, CYC1 and UQCRFS1), 2 core proteins (UQCRC1 and UQCRC2) and 6 low-molecular weight proteins (UQCRH/QCR6, UQCRB/QCR7, UQCRQ/QCR8, UQCR10/QCR9, UQCR11/QCR10 and a cleavage product of UQCRFS1). This cytochrome bc1 complex then forms a dimer. It depends on heme b as a cofactor.

It is found in the mitochondrion inner membrane. In terms of biological role, component of the ubiquinol-cytochrome c reductase complex (complex III or cytochrome b-c1 complex) that is part of the mitochondrial respiratory chain. The b-c1 complex mediates electron transfer from ubiquinol to cytochrome c. Contributes to the generation of a proton gradient across the mitochondrial membrane that is then used for ATP synthesis. This chain is Cytochrome b (MT-CYB), found in Calonectris leucomelas (Streaked shearwater).